The primary structure comprises 635 residues: Probable potassium transport system protein Kup (635 aa).

A run of 12 helical transmembrane segments spans residues 20–40 (MALV…SPLY), 62–82 (VLSL…VTII), 111–131 (AYVV…DGVI), 149–169 (PSLH…VFMV), 180–200 (VFGP…IWNI), 223–243 (GWHG…GEAL), 259–279 (WYFF…ALVL), 292–312 (AVPS…AVIA), 349–369 (IYVP…VLIF), 377–397 (VAYG…LALV), 408–428 (WVLP…IANG), and 429–449 (AKLL…FTLM).

The protein belongs to the HAK/KUP transporter (TC 2.A.72) family.

The protein localises to the cell inner membrane. The enzyme catalyses K(+)(in) + H(+)(in) = K(+)(out) + H(+)(out). Transport of potassium into the cell. Likely operates as a K(+):H(+) symporter. This chain is Probable potassium transport system protein Kup, found in Xanthomonas campestris pv. campestris (strain 8004).